A 118-amino-acid chain; its full sequence is Non-specific lipid-transfer protein A (118 aa).

The first 25 residues, 1–25 (MAGVMKLACLVLACMIVAGPITANR), serve as a signal peptide directing secretion. Cystine bridges form between Cys29-Cys76, Cys39-Cys53, Cys54-Cys100, and Cys74-Cys114.

The protein belongs to the plant LTP family.

Its function is as follows. Plant non-specific lipid-transfer proteins transfer phospholipids as well as galactolipids across membranes. May play a role in wax or cutin deposition in the cell walls of expanding epidermal cells and certain secretory tissues. The sequence is that of Non-specific lipid-transfer protein A (WAX9A) from Brassica oleracea var. italica (Broccoli).